A 377-amino-acid polypeptide reads, in one-letter code: Beta-lactamase (377 aa).

The signal sequence occupies residues 1-19; that stretch reads MFKTTLCALLITASCSTFA. Ser80 functions as the Acyl-ester intermediate in the catalytic mechanism. Ser80, Gln136, Tyr166, Asn168, Ala334, and Asn359 together coordinate a beta-lactam.

The protein belongs to the class-C beta-lactamase family. In terms of assembly, monomer.

It localises to the periplasm. The catalysed reaction is a beta-lactam + H2O = a substituted beta-amino acid. Its activity is regulated as follows. Inhibited by the beta-lactamase-blocking agents avibactam, enmetazobactam, relebactam, nacubactam, vaborbactam, taniborbactam, zidebactam, and beta-lactam-analog boronic acids, via a covalent binding to Ser-80. Inhibited by non-beta-lactam, benzo(b)thiophene-2-boronic acid (BZBTH2B) and various cyclic boronates. Not inhibited by clavulanic acid. Inhibited by O-aryloxycarbonyl hydroxamates, via cross-linking of the active site Ser-80 to Lys-331. Weakly inhibited by citric acid. Class C beta-lactamase which confers resistance to penicillins and cephalosporins. Has benzylpenicillin- and cephaloridine-hydrolyzing activity. Has weak cefuroxime, cefotaxime, cefoxitin and oxacillin-hydrolyzing activities. This Escherichia coli (strain K12) protein is Beta-lactamase.